The primary structure comprises 37 residues: Chitinase-like protein (37 aa).

Residues 1–20 (VLLSVGGDADTESPEKKNLG) are disordered. The GH18 domain maps to 1-37 (VLLSVGGDADTESPEKKNLGGVSIVDLSMDDFRGLLT).

The protein belongs to the glycosyl hydrolase 18 family. IDGF subfamily. Post-translationally, glycosylated.

It localises to the secreted. Its function is as follows. Cooperates with insulin-like peptides to stimulate the proliferation, polarization and motility of imaginal disk cells. May act by stabilizing the binding of insulin-like peptides to its receptor through a simultaneous interaction with both molecules to form a multiprotein signaling complex. The chain is Chitinase-like protein from Heliothis virescens (Tobacco budworm moth).